Here is a 244-residue protein sequence, read N- to C-terminus: Myosin-7 (244 aa).

The rodlike tail (S2 and LMM domains) stretch occupies residues 1-244; it reads VEQTERSRKL…DIGTKGLNEE (244 aa). A coiled-coil region spans residues 1–244; it reads VEQTERSRKL…DIGTKGLNEE (244 aa). Positions 216-244 are disordered; sequence EERADIAESQVNKLRAKSRDIGTKGLNEE. Basic and acidic residues predominate over residues 232–244; the sequence is KSRDIGTKGLNEE.

Muscle myosin is a hexameric protein that consists of 2 heavy chain subunits (MHC), 2 alkali light chain subunits (MLC) and 2 regulatory light chain subunits (MLC-2). Interacts with ECPAS. Interacts (via C-terminus) with LRRC39.

It localises to the cytoplasm. The protein localises to the myofibril. It is found in the sarcomere. Myosins are actin-based motor molecules with ATPase activity essential for muscle contraction. Forms regular bipolar thick filaments that, together with actin thin filaments, constitute the fundamental contractile unit of skeletal and cardiac muscle. The polypeptide is Myosin-7 (MYH7) (Papio hamadryas (Hamadryas baboon)).